We begin with the raw amino-acid sequence, 314 residues long: Lipid A biosynthesis acyltransferase 2 (314 aa).

A helical transmembrane segment spans residues 17-37 (LSPVYWFTWFVLGMIAGISMF). Positions 137–142 (HGWSVD) match the HXXXXD motif motif.

The protein belongs to the LpxL/LpxM/LpxP family. LpxM subfamily.

Its subcellular location is the cell inner membrane. It carries out the reaction an alpha-Kdo-(2-&gt;4)-alpha-Kdo-(2-&gt;6)-(acyl)-lipid IVA + a fatty acyl-[ACP] = an alpha-Kdo-(2-&gt;4)-alpha-Kdo-(2-&gt;6)-lipid A + holo-[ACP]. The protein operates within glycolipid biosynthesis; KDO(2)-lipid A biosynthesis; KDO(2)-lipid A from CMP-3-deoxy-D-manno-octulosonate and lipid IV(A): step 4/4. It functions in the pathway bacterial outer membrane biogenesis; lipopolysaccharide biosynthesis. Catalyzes the transfer of an acyl chain from an acyl-[acyl-carrier-protein] (ACP) to a Kdo(2)-(acyl)-lipid IV(A) to form a Kdo(2)-lipid A. The chain is Lipid A biosynthesis acyltransferase 2 from Shigella flexneri.